Here is a 1067-residue protein sequence, read N- to C-terminus: Cadmium/zinc-transporting ATPase HMA2 (1067 aa).

One can recognise an HMA domain in the interval 9–75 (QKSYFDVLGI…ALNQARLEAS (67 aa)). The next 8 helical transmembrane spans lie at 94 to 114 (YVLL…WHPL), 117 to 137 (FALV…IAAI), 140 to 160 (LTLD…ALKD), 162 to 182 (SEAG…TRAS), 313 to 333 (YTPA…IAKA), 342 to 362 (LALV…TPIA), 649 to 669 (IIVN…LAFA), and 673 to 693 (LIWA…MYSM). Disordered regions lie at residues 711–739 (HHGS…HHCS), 760–790 (HDHH…SHGH), and 960–996 (NDTH…GHHP). Positions 724-735 (HGSHAKKNHGVS) are enriched in basic residues. 2 stretches are compositionally biased toward basic and acidic residues: residues 760 to 774 (HDHH…EPAH) and 975 to 996 (SSDH…GHHP).

This sequence belongs to the cation transport ATPase (P-type) (TC 3.A.3) family. Type IB subfamily. In roots, localizes at the pericycle cells. In nodes, localizes in the phloem parenchyma and companion cells of both enlarged and diffuse vascular bundles.

The protein localises to the cell membrane. The enzyme catalyses Zn(2+)(in) + ATP + H2O = Zn(2+)(out) + ADP + phosphate + H(+). It catalyses the reaction Cd(2+)(in) + ATP + H2O = Cd(2+)(out) + ADP + phosphate + H(+). Its function is as follows. Zinc/cadmium transporter that plays an essential role in promoting translocation of zinc and cadmium from roots to shoots. May control cadmium loading into xylem. In roots, transports zinc and cadmium from the apoplast to the symplast to facilitate translocation via the phloem. In nodes, functions to load zinc and cadmium to the phloem for the preferential distribution to the upper nodes and panicles. The polypeptide is Cadmium/zinc-transporting ATPase HMA2 (Oryza sativa subsp. japonica (Rice)).